The primary structure comprises 337 residues: Terpene synthase 4 (337 aa).

Mg(2+) is bound by residues Asp-94 and Asp-98. Positions 94-98 match the D(D/E)XX(D/E) motif motif; it reads DDIFD. Residue Arg-195 coordinates substrate. Asn-241, Ser-245, and Glu-249 together coordinate Mg(2+). An NSE motif motif is present at residues 241-249; the sequence is NDIYSYHRE. The short motif at 320–327 is the WxxxxxRY motif element; that stretch reads WSESCTRY.

This sequence belongs to the terpene synthase family. Mg(2+) is required as a cofactor.

It catalyses the reaction (2E,6E)-farnesyl diphosphate = alpha-muurolene + diphosphate. The enzyme catalyses (2E,6E)-farnesyl diphosphate = (-)-(E)-beta-caryophyllene + diphosphate. Functionally, terpene synthase that catalyzes the cyclization of farnesyl diphosphate (FPP) into alpha-muurolene, (-)-beta-caryophyllene, and one unidentified sesquiterpene. TPS4 shows only trace monoterpene synthase activity with geranyl diphosphate (GPP) as substrate and produces very small amounts of myrcene. P.polycephalum has a unique biology and these volatile terpenoids could function in internal communication of P.polycephalum, to mark the territory that have been explored, or they may be involved in chemotaxis. The protein is Terpene synthase 4 of Physarum polycephalum (Slime mold).